We begin with the raw amino-acid sequence, 419 residues long: Putative L-glutamine:3-amino-2,3-dideoxy-scyllo-inosose aminotransferase (419 aa).

Lysine 199 carries the post-translational modification N6-(pyridoxal phosphate)lysine.

Belongs to the DegT/DnrJ/EryC1 family. L-glutamine:2-deoxy-scyllo-inosose/scyllo-inosose aminotransferase subfamily. Pyridoxal 5'-phosphate serves as cofactor.

The catalysed reaction is 3-amino-2,3-dideoxy-scyllo-inosose + L-glutamine = 2-deoxystreptamine + 2-oxoglutaramate. The protein operates within metabolic intermediate biosynthesis; 2-deoxystreptamine biosynthesis; 2-deoxystreptamine from D-glucose 6-phosphate: step 4/4. It participates in antibiotic biosynthesis; kanamycin biosynthesis. In terms of biological role, catalyzes the transamination of 3-amino-2,3-dideoxy-scyllo-inosose (amino-DOI) into 2-deoxystreptamine (DOS). The polypeptide is Putative L-glutamine:3-amino-2,3-dideoxy-scyllo-inosose aminotransferase (kanD) (Streptomyces kanamyceticus).